Here is a 328-residue protein sequence, read N- to C-terminus: Carbonic anhydrase-related protein 11 (328 aa).

Residues 1 to 23 form the signal peptide; that stretch reads MGAAARLSAPRALVLWAALGAAA. The Alpha-carbonic anhydrase domain maps to 33 to 303; that stretch reads DWWSYKDNLQ…LAHRALRGNR (271 aa). Residues N118, N170, and N260 are each glycosylated (N-linked (GlcNAc...) asparagine). The tract at residues 299 to 328 is disordered; it reads LRGNRDPRHPERRCRGPNYRLHVDGVPHGR. Basic and acidic residues predominate over residues 319 to 328; the sequence is LHVDGVPHGR.

Belongs to the alpha-carbonic anhydrase family. As to expression, expressed abundantly in the brain with moderate expression also present in spinal cord and thyroid.

Its subcellular location is the secreted. In terms of biological role, does not have a catalytic activity. This is Carbonic anhydrase-related protein 11 (CA11) from Homo sapiens (Human).